The chain runs to 288 residues: Energy-coupling factor transporter ATP-binding protein EcfA2 (288 aa).

Positions 3-245 (IKIENLTHVY…VDTLESVGLA (243 aa)) constitute an ABC transporter domain. 40 to 47 (GHTGSGKS) contacts ATP.

The protein belongs to the ABC transporter superfamily. Energy-coupling factor EcfA family. As to quaternary structure, forms a stable energy-coupling factor (ECF) transporter complex composed of 2 membrane-embedded substrate-binding proteins (S component), 2 ATP-binding proteins (A component) and 2 transmembrane proteins (T component).

It localises to the cell membrane. ATP-binding (A) component of a common energy-coupling factor (ECF) ABC-transporter complex. Unlike classic ABC transporters this ECF transporter provides the energy necessary to transport a number of different substrates. The chain is Energy-coupling factor transporter ATP-binding protein EcfA2 from Clostridium tetani (strain Massachusetts / E88).